The primary structure comprises 362 residues: Oxygen-dependent coproporphyrinogen-III oxidase (362 aa).

Residues 12 to 31 (RQENDQSTPQLELPPTDSRD) are disordered. Position 118 (S118) interacts with substrate. Residues H122 and H132 each contribute to the a divalent metal cation site. Catalysis depends on H132, which acts as the Proton donor. 134–136 (NYR) serves as a coordination point for substrate. A divalent metal cation is bound by residues H166 and H196. Positions 286–321 (YVEFNLVWDRGTIFGLQTNGRTESILMSLPPLVRWE) are important for dimerization.

Belongs to the aerobic coproporphyrinogen-III oxidase family. In terms of assembly, homodimer. A divalent metal cation is required as a cofactor.

The protein resides in the cytoplasm. It carries out the reaction coproporphyrinogen III + O2 + 2 H(+) = protoporphyrinogen IX + 2 CO2 + 2 H2O. The protein operates within porphyrin-containing compound metabolism; protoporphyrin-IX biosynthesis; protoporphyrinogen-IX from coproporphyrinogen-III (O2 route): step 1/1. Functionally, involved in the heme and chlorophyll biosynthesis. Catalyzes the aerobic oxidative decarboxylation of propionate groups of rings A and B of coproporphyrinogen-III to yield the vinyl groups in protoporphyrinogen-IX. The chain is Oxygen-dependent coproporphyrinogen-III oxidase from Synechococcus sp. (strain CC9902).